The chain runs to 490 residues: Betaine aldehyde dehydrogenase (490 aa).

K(+) is bound by residues Ile27 and Asp93. 150–152 (GAW) is an NAD(+) binding site. Lys162 acts as the Charge relay system in catalysis. An NAD(+)-binding site is contributed by 176-179 (KPSE). Val180 provides a ligand contact to K(+). Residue 230–233 (GTDT) participates in NAD(+) binding. Residue Leu246 participates in K(+) binding. Catalysis depends on Glu252, which acts as the Proton acceptor. 3 residues coordinate NAD(+): Gly254, Cys286, and Glu387. The active-site Nucleophile is Cys286. Residue Cys286 is modified to Cysteine sulfenic acid (-SOH). 2 residues coordinate K(+): Lys457 and Gly460. Glu464 serves as the catalytic Charge relay system.

It belongs to the aldehyde dehydrogenase family. In terms of assembly, dimer of dimers. Requires K(+) as cofactor.

It carries out the reaction betaine aldehyde + NAD(+) + H2O = glycine betaine + NADH + 2 H(+). It functions in the pathway amine and polyamine biosynthesis; betaine biosynthesis via choline pathway; betaine from betaine aldehyde: step 1/1. Involved in the biosynthesis of the osmoprotectant glycine betaine. Catalyzes the irreversible oxidation of betaine aldehyde to the corresponding acid. This chain is Betaine aldehyde dehydrogenase, found in Pseudomonas fluorescens (strain Pf0-1).